The sequence spans 290 residues: Aquaporin-3 (290 aa).

The Cytoplasmic portion of the chain corresponds to 1 to 24; sequence MGRQKELVTRCGEMLHIRYRLLRQ. Residues 25–42 form a helical membrane-spanning segment; the sequence is ALAECLGTLILVMFGCGS. The Extracellular portion of the chain corresponds to 43–56; sequence VAQVVLSRGTHGGF. A helical transmembrane segment spans residues 57-74; sequence LTINLAFGFAVTLGILVA. Residues 75–78 lie on the Cytoplasmic side of the membrane; it reads GQVS. Positions 79 to 92 form an intramembrane region, discontinuously helical; that stretch reads GAHLNPAVTFAMCF. Positions 83–85 match the NPA 1 motif; sequence NPA. At 93 to 100 the chain is on the cytoplasmic side; that stretch reads LAREPWIK. A helical membrane pass occupies residues 101–121; it reads LPVYTLAQTLGAFLGAGIIFG. Over 122 to 159 the chain is Extracellular; sequence LYYDAIWAFANNQLIVSGPNGTAGIFATYPSGHLDMVN. N-linked (GlcNAc...) asparagine glycosylation occurs at N141. The chain crosses the membrane as a helical span at residues 160–177; that stretch reads GFFDQFIGTASLIVCVLA. The Cytoplasmic portion of the chain corresponds to 178–189; that stretch reads IVDPNNNPVPRG. The chain crosses the membrane as a helical span at residues 190 to 206; sequence LEAFTVGLVVLVIGTSM. The Extracellular portion of the chain corresponds to 207–210; sequence GFNS. Positions 211 to 224 form an intramembrane region, discontinuously helical; sequence GYAVNPARDFGPRL. Positions 215-217 match the NPA 2 motif; it reads NPA. Residues 225–242 are Extracellular-facing; sequence FTAIAGWGSEVFTTGRHW. A helical transmembrane segment spans residues 243–264; the sequence is WWVPIASPLLGSIAGVFVYQLM. Residues 265 to 290 lie on the Cytoplasmic side of the membrane; the sequence is IGCHLEPPPPSTDEENVKLSQVKHKE.

It belongs to the MIP/aquaporin (TC 1.A.8) family. In terms of assembly, homotetramer; each monomer provides an independent glycerol/water pore. Could also exist in other oligomeric states. As to expression, highly expressed in stomach and spleen, with lower expression in kidney and lung.

It localises to the cell membrane. The protein resides in the basolateral cell membrane. The catalysed reaction is glycerol(in) = glycerol(out). The enzyme catalyses H2O(in) = H2O(out). It carries out the reaction urea(in) = urea(out). It catalyses the reaction H2O2(out) = H2O2(in). Its function is as follows. Aquaglyceroporins form homotetrameric transmembrane channels, with each monomer independently mediating glycerol and water transport across the plasma membrane along their osmotic gradient. Could also be permeable to urea. Also participates in cell permeability to H2O2 and H2O2-mediated signaling. In skin, transports glycerol to the epidermis and stratum corneum, where it maintains hydration, elasticity, and supports lipid biosynthesis for barrier repair. In kidney, contributes to the reabsorption of water, helping the body maintain proper fluid balance. The polypeptide is Aquaporin-3 (Sus scrofa (Pig)).